Consider the following 152-residue polypeptide: Deoxyuridine 5'-triphosphate nucleotidohydrolase (152 aa).

Substrate contacts are provided by residues 72-74 (RSG), asparagine 85, and 89-91 (TID).

Belongs to the dUTPase family. Mg(2+) serves as cofactor.

It carries out the reaction dUTP + H2O = dUMP + diphosphate + H(+). It participates in pyrimidine metabolism; dUMP biosynthesis; dUMP from dCTP (dUTP route): step 2/2. In terms of biological role, this enzyme is involved in nucleotide metabolism: it produces dUMP, the immediate precursor of thymidine nucleotides and it decreases the intracellular concentration of dUTP so that uracil cannot be incorporated into DNA. The polypeptide is Deoxyuridine 5'-triphosphate nucleotidohydrolase (Afipia carboxidovorans (strain ATCC 49405 / DSM 1227 / KCTC 32145 / OM5) (Oligotropha carboxidovorans)).